The primary structure comprises 310 residues: tRNA dimethylallyltransferase (310 aa).

15 to 22 (GATASGKT) lines the ATP pocket. A substrate-binding site is contributed by 17–22 (TASGKT).

This sequence belongs to the IPP transferase family. Monomer. Mg(2+) serves as cofactor.

The catalysed reaction is adenosine(37) in tRNA + dimethylallyl diphosphate = N(6)-dimethylallyladenosine(37) in tRNA + diphosphate. In terms of biological role, catalyzes the transfer of a dimethylallyl group onto the adenine at position 37 in tRNAs that read codons beginning with uridine, leading to the formation of N6-(dimethylallyl)adenosine (i(6)A). This Nocardioides sp. (strain ATCC BAA-499 / JS614) protein is tRNA dimethylallyltransferase.